The primary structure comprises 164 residues: Ecotin (164 aa).

The N-terminal stretch at 1–20 is a signal peptide; it reads MKMFVPAVVFAALASASAWA. A disulfide bridge connects residues Cys-72 and Cys-109.

It belongs to the protease inhibitor I11 (ecotin) family. In terms of assembly, homodimer.

It is found in the periplasm. Its function is as follows. General inhibitor of pancreatic serine proteases: inhibits chymotrypsin, trypsin, elastases, factor X, kallikrein as well as a variety of other proteases. The polypeptide is Ecotin (Salmonella enteritidis PT4 (strain P125109)).